A 229-amino-acid chain; its full sequence is 2-C-methyl-D-erythritol 4-phosphate cytidylyltransferase (229 aa).

It belongs to the IspD/TarI cytidylyltransferase family. IspD subfamily.

It catalyses the reaction 2-C-methyl-D-erythritol 4-phosphate + CTP + H(+) = 4-CDP-2-C-methyl-D-erythritol + diphosphate. It participates in isoprenoid biosynthesis; isopentenyl diphosphate biosynthesis via DXP pathway; isopentenyl diphosphate from 1-deoxy-D-xylulose 5-phosphate: step 2/6. Functionally, catalyzes the formation of 4-diphosphocytidyl-2-C-methyl-D-erythritol from CTP and 2-C-methyl-D-erythritol 4-phosphate (MEP). This Clostridium botulinum (strain Okra / Type B1) protein is 2-C-methyl-D-erythritol 4-phosphate cytidylyltransferase.